We begin with the raw amino-acid sequence, 267 residues long: Small ribosomal subunit protein uS2 (267 aa).

The tract at residues 237-267 (IGESAAAPSEPALETASAEATAEGEQPGSQA) is disordered. A compositionally biased stretch (low complexity) spans 238 to 261 (GESAAAPSEPALETASAEATAEGE).

Belongs to the universal ribosomal protein uS2 family.

The protein is Small ribosomal subunit protein uS2 of Chelativorans sp. (strain BNC1).